A 47-amino-acid chain; its full sequence is Photosystem II reaction center protein Psb30 (47 aa).

A helical transmembrane segment spans residues 19 to 39 (VIFQLLSVALIVIAGPVVIFL).

This sequence belongs to the Psb30/Ycf12 family. PSII is composed of 1 copy each of membrane proteins PsbA, PsbB, PsbC, PsbD, PsbE, PsbF, PsbH, PsbI, PsbJ, PsbK, PsbL, PsbM, PsbT, PsbX, PsbY, PsbZ, Psb30/Ycf12, peripheral proteins PsbO, CyanoQ (PsbQ), PsbU, PsbV and a large number of cofactors. It forms dimeric complexes.

Its subcellular location is the cellular thylakoid membrane. Functionally, a core subunit of photosystem II (PSII), probably helps stabilize the reaction center. The polypeptide is Photosystem II reaction center protein Psb30 (Nostoc punctiforme (strain ATCC 29133 / PCC 73102)).